Reading from the N-terminus, the 277-residue chain is Elongation factor Ts (277 aa).

The involved in Mg(2+) ion dislocation from EF-Tu stretch occupies residues 81–84 (TDFV).

This sequence belongs to the EF-Ts family.

The protein localises to the cytoplasm. Functionally, associates with the EF-Tu.GDP complex and induces the exchange of GDP to GTP. It remains bound to the aminoacyl-tRNA.EF-Tu.GTP complex up to the GTP hydrolysis stage on the ribosome. This is Elongation factor Ts from Amoebophilus asiaticus (strain 5a2).